We begin with the raw amino-acid sequence, 322 residues long: Cyclin mcs2 (322 aa).

Phosphoserine is present on serine 310.

This sequence belongs to the cyclin family. Cyclin C subfamily. In terms of assembly, one of the nine subunits forming the core-TFIIH basal transcription factor. Interacts with crk1 and skp1.

The protein resides in the nucleus. Its function is as follows. Essential for progression through the cell cycle. Possesses kinase activity that can be detected when myelin basic protein (MBP) is provided as an exogenous substrate. In Schizosaccharomyces pombe (strain 972 / ATCC 24843) (Fission yeast), this protein is Cyclin mcs2 (mcs2).